The sequence spans 51 residues: Protein I177L (51 aa).

Asn11 carries N-linked (GlcNAc...) asparagine; by host glycosylation.

It belongs to the asfivirus I177L family.

Its subcellular location is the virion. In Ornithodoros (relapsing fever ticks), this protein is Protein I177L.